A 481-amino-acid chain; its full sequence is UDP-N-acetylmuramate--L-alanine ligase (481 aa).

Residue 122 to 128 (GVHGKTT) participates in ATP binding.

Belongs to the MurCDEF family.

The protein resides in the cytoplasm. The enzyme catalyses UDP-N-acetyl-alpha-D-muramate + L-alanine + ATP = UDP-N-acetyl-alpha-D-muramoyl-L-alanine + ADP + phosphate + H(+). It functions in the pathway cell wall biogenesis; peptidoglycan biosynthesis. Cell wall formation. This Treponema pallidum (strain Nichols) protein is UDP-N-acetylmuramate--L-alanine ligase.